The following is a 248-amino-acid chain: Probable transcriptional regulatory protein M446_6579 (248 aa).

This sequence belongs to the TACO1 family.

It localises to the cytoplasm. The polypeptide is Probable transcriptional regulatory protein M446_6579 (Methylobacterium sp. (strain 4-46)).